Reading from the N-terminus, the 470-residue chain is ATP synthase subunit beta (470 aa).

Residue glycine 158–threonine 165 coordinates ATP.

The protein belongs to the ATPase alpha/beta chains family. As to quaternary structure, F-type ATPases have 2 components, CF(1) - the catalytic core - and CF(0) - the membrane proton channel. CF(1) has five subunits: alpha(3), beta(3), gamma(1), delta(1), epsilon(1). CF(0) has three main subunits: a(1), b(2) and c(9-12). The alpha and beta chains form an alternating ring which encloses part of the gamma chain. CF(1) is attached to CF(0) by a central stalk formed by the gamma and epsilon chains, while a peripheral stalk is formed by the delta and b chains.

Its subcellular location is the cell membrane. The catalysed reaction is ATP + H2O + 4 H(+)(in) = ADP + phosphate + 5 H(+)(out). Its function is as follows. Produces ATP from ADP in the presence of a proton gradient across the membrane. The catalytic sites are hosted primarily by the beta subunits. This chain is ATP synthase subunit beta, found in Halalkalibacterium halodurans (strain ATCC BAA-125 / DSM 18197 / FERM 7344 / JCM 9153 / C-125) (Bacillus halodurans).